Here is a 627-residue protein sequence, read N- to C-terminus: Protein fem-1 homolog B (627 aa).

ANK repeat units follow at residues 45–74 (QRST…VQTQ), 87–116 (DGAT…NVNH), 120–149 (TNST…NISI), and 153–182 (YDNT…DPNA). Zn(2+) is bound by residues H185, C186, and H218. ANK repeat units lie at residues 186 to 215 (CGAT…AIVV) and 218 to 248 (HGMT…DRRS). A TPR repeat occupies 344–377 (SHPIIYRGAVYADNMEFEQCIKLWLHALHLRQKG). 2 ANK repeats span residues 483-527 (EGFS…EVNA) and 531-568 (EGNS…HTDM).

The protein belongs to the fem-1 family. Component of a CRL2 E3 ubiquitin-protein ligase complex, also named ECS (Elongin BC-CUL2/5-SOCS-box protein) complex, composed of CUL2, Elongin BC (ELOB and ELOC), RBX1 and substrate-specific adapter FEM1B. Homooligomer. Interacts with PPM1F and PHTF1. Interacts with the death domain of FAS/TNFRSF6 and TNFRSF1A. Interacts with CHEK1. Interacts with NKX3-1. Expressed in pancreatic islets, within both beta cells and non-beta cells (at protein level). Highly expressed in adult testis; expressed in all types of spermatogonia. Also expressed in the prostate of neonatal mice.

The protein resides in the cytoplasm. It is found in the nucleus. It functions in the pathway protein modification; protein ubiquitination. With respect to regulation, activity of the CRL2(FEM1B) complex toward FNIP1 is inhibited by BEX family proteins (BEX1, BEX2, BEX3 and/or BEX4) in absence of reductive stress. Mechanistically, BEX proteins act as pseudosubstrate inhibitors that associate with FEM1B via zinc in absence of reductive stress, thereby preventing association between FEM1B and FNIP1. In terms of biological role, substrate-recognition component of a Cul2-RING (CRL2) E3 ubiquitin-protein ligase complex of the DesCEND (destruction via C-end degrons) pathway, which recognizes a C-degron located at the extreme C terminus of target proteins, leading to their ubiquitination and degradation. The C-degron recognized by the DesCEND pathway is usually a motif of less than ten residues and can be present in full-length proteins, truncated proteins or proteolytically cleaved forms. The CRL2(FEM1B) complex specifically recognizes proteins ending with -Gly-Leu-Asp-Arg, such as CDK5R1, leading to their ubiquitination and degradation. Also acts as a regulator of the reductive stress response by mediating ubiquitination of reduced FNIP1: in response to reductive stress, the CRL2(FEM1B) complex specifically recognizes a conserved Cys degron in FNIP1 when this degron is reduced, leading to FNIP1 degradation and subsequent activation of mitochondria to recalibrate reactive oxygen species (ROS). Mechanistically, recognizes and binds reduced FNIP1 through two interface zinc ions, which act as a molecular glue that recruit reduced FNIP1 to FEM1B. Promotes ubiquitination of GLI1, suppressing GLI1 transcriptional activator activity. Promotes ubiquitination and degradation of ANKRD37. Promotes ubiquitination and degradation of SLBP. Involved in apoptosis by acting as a death receptor-associated protein that mediates apoptosis. Also involved in glucose homeostasis in pancreatic islet. May also act as an adapter/mediator in replication stress-induced signaling that leads to the activation of CHEK1. This is Protein fem-1 homolog B from Mus musculus (Mouse).